Consider the following 307-residue polypeptide: 4-hydroxythreonine-4-phosphate dehydrogenase (307 aa).

Substrate is bound by residues His126 and Thr127. The a divalent metal cation site is built by His156, His195, and His251. Lys259, Asn268, and Arg277 together coordinate substrate.

It belongs to the PdxA family. Homodimer. Zn(2+) serves as cofactor. Mg(2+) is required as a cofactor. Requires Co(2+) as cofactor.

The protein localises to the cytoplasm. The catalysed reaction is 4-(phosphooxy)-L-threonine + NAD(+) = 3-amino-2-oxopropyl phosphate + CO2 + NADH. Its pathway is cofactor biosynthesis; pyridoxine 5'-phosphate biosynthesis; pyridoxine 5'-phosphate from D-erythrose 4-phosphate: step 4/5. Catalyzes the NAD(P)-dependent oxidation of 4-(phosphooxy)-L-threonine (HTP) into 2-amino-3-oxo-4-(phosphooxy)butyric acid which spontaneously decarboxylates to form 3-amino-2-oxopropyl phosphate (AHAP). This chain is 4-hydroxythreonine-4-phosphate dehydrogenase, found in Helicobacter pylori (strain HPAG1).